Here is a 724-residue protein sequence, read N- to C-terminus: Acyl-coenzyme A oxidase 2 (724 aa).

A disordered region spans residues 1–23 (MALISNLKDEYDHPTKTDPDTNP). A compositionally biased stretch (basic and acidic residues) spans 7–21 (LKDEYDHPTKTDPDT).

The protein belongs to the acyl-CoA oxidase family. FAD is required as a cofactor.

It is found in the peroxisome. It catalyses the reaction a 2,3-saturated acyl-CoA + O2 = a (2E)-enoyl-CoA + H2O2. The protein operates within lipid metabolism; peroxisomal fatty acid beta-oxidation. The protein is Acyl-coenzyme A oxidase 2 (POX2) of Candida maltosa (Yeast).